Consider the following 324-residue polypeptide: NADH-ubiquinone oxidoreductase chain 1 (324 aa).

The next 8 membrane-spanning stretches (helical) occupy residues 9–29 (LINPLAYIVPVLLAVAFLTLL), 76–96 (LFLVTPMLALTLAMTLWAPMP), 106–126 (LGVLFILALSSLAVYSILGSG), 146–166 (ISYEVSLGLILRSIIIFWGGY), 177–197 (ALWLLLPACPLAAMWYISTLA), 228–248 (LLFLAEYANILLMNTLSAILF), 259–279 (ELTTINLMTKAALLSVVFLWV), and 299–319 (FLPLTLALVLWHTALPIAFAG).

This sequence belongs to the complex I subunit 1 family.

It localises to the mitochondrion inner membrane. The catalysed reaction is a ubiquinone + NADH + 5 H(+)(in) = a ubiquinol + NAD(+) + 4 H(+)(out). In terms of biological role, core subunit of the mitochondrial membrane respiratory chain NADH dehydrogenase (Complex I) that is believed to belong to the minimal assembly required for catalysis. Complex I functions in the transfer of electrons from NADH to the respiratory chain. The immediate electron acceptor for the enzyme is believed to be ubiquinone. The chain is NADH-ubiquinone oxidoreductase chain 1 (MT-ND1) from Formosania lacustris (Oriental stream loach).